The following is a 502-amino-acid chain: Protein YdgA (502 aa).

The N-terminal stretch at 1-19 (MNKSLVAVGVIVALGVVWT) is a signal peptide.

It to E.coli YihF and H.influenzae HI_1236. In terms of assembly, homodimer.

It localises to the cell inner membrane. This Escherichia coli (strain K12) protein is Protein YdgA (ydgA).